Reading from the N-terminus, the 147-residue chain is UPF0208 membrane protein CGSHiEE_06015 (147 aa).

2 consecutive transmembrane segments (helical) span residues 38-58 (FAQK…QIYA) and 67-87 (IAIL…YWLG).

Belongs to the UPF0208 family.

Its subcellular location is the cell inner membrane. The polypeptide is UPF0208 membrane protein CGSHiEE_06015 (Haemophilus influenzae (strain PittEE)).